We begin with the raw amino-acid sequence, 266 residues long: Small ribosomal subunit protein uS2 (266 aa).

Belongs to the universal ribosomal protein uS2 family.

The protein is Small ribosomal subunit protein uS2 of Paramagnetospirillum magneticum (strain ATCC 700264 / AMB-1) (Magnetospirillum magneticum).